Consider the following 192-residue polypeptide: Small ribosomal subunit protein uS5 (192 aa).

The region spanning 20–83 (FVDKLVHINR…EAAKRGLIRV (64 aa)) is the S5 DRBM domain. Residues 162–192 (SVAARRGLKVSALQARRRDADPADTSEAAVA) form a disordered region.

This sequence belongs to the universal ribosomal protein uS5 family. In terms of assembly, part of the 30S ribosomal subunit. Contacts proteins S4 and S8.

Its function is as follows. With S4 and S12 plays an important role in translational accuracy. Functionally, located at the back of the 30S subunit body where it stabilizes the conformation of the head with respect to the body. The chain is Small ribosomal subunit protein uS5 from Methylorubrum extorquens (strain CM4 / NCIMB 13688) (Methylobacterium extorquens).